The chain runs to 1415 residues: DNA-directed RNA polymerase subunit beta' (1415 aa).

The Zn(2+) site is built by cysteine 72, cysteine 74, cysteine 87, and cysteine 90. The Mg(2+) site is built by aspartate 463, aspartate 465, and aspartate 467. Zn(2+) is bound by residues cysteine 811, cysteine 885, cysteine 892, and cysteine 895.

Belongs to the RNA polymerase beta' chain family. As to quaternary structure, the RNAP catalytic core consists of 2 alpha, 1 beta, 1 beta' and 1 omega subunit. When a sigma factor is associated with the core the holoenzyme is formed, which can initiate transcription. Mg(2+) serves as cofactor. Requires Zn(2+) as cofactor.

The catalysed reaction is RNA(n) + a ribonucleoside 5'-triphosphate = RNA(n+1) + diphosphate. Its function is as follows. DNA-dependent RNA polymerase catalyzes the transcription of DNA into RNA using the four ribonucleoside triphosphates as substrates. In Cereibacter sphaeroides (strain ATCC 17023 / DSM 158 / JCM 6121 / CCUG 31486 / LMG 2827 / NBRC 12203 / NCIMB 8253 / ATH 2.4.1.) (Rhodobacter sphaeroides), this protein is DNA-directed RNA polymerase subunit beta'.